Reading from the N-terminus, the 300-residue chain is Virginiamycin B lyase (300 aa).

Position 231 (His231) interacts with substrate. A Mg(2+)-binding site is contributed by Glu270. His272 (proton acceptor) is an active-site residue. Glu287 lines the Mg(2+) pocket.

Belongs to the Vgb family. Monomer. The cofactor is Mg(2+).

Inactivates the type B streptogramin antibiotics by linearizing the lactone ring at the ester linkage, generating a free phenylglycine carboxylate and converting the threonyl moiety into 2-amino-butenoic acid. This chain is Virginiamycin B lyase, found in Saccharopolyspora erythraea (strain ATCC 11635 / DSM 40517 / JCM 4748 / NBRC 13426 / NCIMB 8594 / NRRL 2338).